Consider the following 737-residue polypeptide: Catalase-peroxidase (737 aa).

The disordered stretch occupies residues 1 to 32 (MSKENMSNEGKCPFNHGAAGTNQSSGRGTSNK). Residues 20 to 32 (GTNQSSGRGTSNK) show a composition bias toward polar residues. Residues 103–226 (WHSAGTYRTA…LAAVQMGLIY (124 aa)) constitute a cross-link (tryptophyl-tyrosyl-methioninium (Trp-Tyr) (with M-252)). The Proton acceptor role is filled by histidine 104. Residues 226 to 252 (YVNPEGPEGKPDTLASARDIRDTFGRM) constitute a cross-link (tryptophyl-tyrosyl-methioninium (Tyr-Met) (with W-103)). Histidine 267 is a binding site for heme b.

This sequence belongs to the peroxidase family. Peroxidase/catalase subfamily. As to quaternary structure, homodimer or homotetramer. Requires heme b as cofactor. Post-translationally, formation of the three residue Trp-Tyr-Met cross-link is important for the catalase, but not the peroxidase activity of the enzyme.

The enzyme catalyses H2O2 + AH2 = A + 2 H2O. The catalysed reaction is 2 H2O2 = O2 + 2 H2O. In terms of biological role, bifunctional enzyme with both catalase and broad-spectrum peroxidase activity. The protein is Catalase-peroxidase of Marinomonas sp. (strain MWYL1).